An 860-amino-acid chain; its full sequence is Leucine--tRNA ligase (860 aa).

Positions 42–52 (PYPSGRLHMGH) match the 'HIGH' region motif. The 'KMSKS' region motif lies at 619-623 (KMSKS). Lys-622 is a binding site for ATP.

This sequence belongs to the class-I aminoacyl-tRNA synthetase family.

It is found in the cytoplasm. The catalysed reaction is tRNA(Leu) + L-leucine + ATP = L-leucyl-tRNA(Leu) + AMP + diphosphate. This is Leucine--tRNA ligase from Yersinia pseudotuberculosis serotype O:3 (strain YPIII).